A 400-amino-acid chain; its full sequence is Enoyl-[acyl-carrier-protein] reductase [NADH] (400 aa).

NAD(+) contacts are provided by residues 74 to 75, 111 to 112, and 139 to 140; these read FE, DA, and VA. Tyrosine 225 lines the substrate pocket. The active-site Proton donor is tyrosine 235. NAD(+) is bound by residues lysine 244 and 273–275; that span reads VVT.

The protein belongs to the TER reductase family. As to quaternary structure, monomer.

It catalyses the reaction a 2,3-saturated acyl-[ACP] + NAD(+) = a (2E)-enoyl-[ACP] + NADH + H(+). Its pathway is lipid metabolism; fatty acid biosynthesis. Functionally, involved in the final reduction of the elongation cycle of fatty acid synthesis (FAS II). Catalyzes the reduction of a carbon-carbon double bond in an enoyl moiety that is covalently linked to an acyl carrier protein (ACP). This is Enoyl-[acyl-carrier-protein] reductase [NADH] from Psychromonas ingrahamii (strain DSM 17664 / CCUG 51855 / 37).